Reading from the N-terminus, the 178-residue chain is Large ribosomal subunit protein bL17 (178 aa).

Residues 126-139 (DRARRVAASKKAEE) show a composition bias toward basic and acidic residues. A disordered region spans residues 126–178 (DRARRVAASKKAEEQAPAAEAEEQAPAAEAEAPAADAAAEAKADEAAEDKKDA). Low complexity predominate over residues 140-163 (QAPAAEAEEQAPAAEAEAPAADAA). The segment covering 164–178 (AEAKADEAAEDKKDA) has biased composition (basic and acidic residues).

It belongs to the bacterial ribosomal protein bL17 family. As to quaternary structure, part of the 50S ribosomal subunit. Contacts protein L32.

The sequence is that of Large ribosomal subunit protein bL17 from Nocardia farcinica (strain IFM 10152).